The chain runs to 441 residues: Arginine biosynthesis bifunctional protein ArgJ, mitochondrial (441 aa).

The transit peptide at 1 to 8 directs the protein to the mitochondrion; the sequence is MRISSTLL. 6 residues coordinate substrate: Thr-177, Lys-204, Thr-215, Glu-301, Asn-436, and Ser-441. Thr-215 acts as the Nucleophile in catalysis.

Belongs to the ArgJ family. Heterodimer of an alpha and a beta chain. The alpha and beta chains are autoproteolytically processed from a single precursor protein within the mitochondrion.

The protein resides in the mitochondrion matrix. The catalysed reaction is N(2)-acetyl-L-ornithine + L-glutamate = N-acetyl-L-glutamate + L-ornithine. It catalyses the reaction L-glutamate + acetyl-CoA = N-acetyl-L-glutamate + CoA + H(+). It functions in the pathway amino-acid biosynthesis; L-arginine biosynthesis; L-ornithine and N-acetyl-L-glutamate from L-glutamate and N(2)-acetyl-L-ornithine (cyclic): step 1/1. Its pathway is amino-acid biosynthesis; L-arginine biosynthesis; N(2)-acetyl-L-ornithine from L-glutamate: step 1/4. With respect to regulation, inhibited by ornithine. Functionally, catalyzes two activities which are involved in the cyclic version of arginine biosynthesis: the synthesis of acetylglutamate from glutamate and acetyl-CoA, and of ornithine by transacetylation between acetylornithine and glutamate. In Saccharomyces cerevisiae (strain ATCC 204508 / S288c) (Baker's yeast), this protein is Arginine biosynthesis bifunctional protein ArgJ, mitochondrial.